The chain runs to 256 residues: Enolase-phosphatase E1 (256 aa).

Mg(2+) is bound by residues Asp14 and Glu16. Substrate is bound by residues 142 to 143 (SS) and Lys176. Mg(2+) is bound at residue Asp201.

This sequence belongs to the HAD-like hydrolase superfamily. MasA/MtnC family. Monomer. Mg(2+) serves as cofactor.

Its subcellular location is the cytoplasm. It is found in the nucleus. The catalysed reaction is 5-methylsulfanyl-2,3-dioxopentyl phosphate + H2O = 1,2-dihydroxy-5-(methylsulfanyl)pent-1-en-3-one + phosphate. It functions in the pathway amino-acid biosynthesis; L-methionine biosynthesis via salvage pathway; L-methionine from S-methyl-5-thio-alpha-D-ribose 1-phosphate: step 3/6. It participates in amino-acid biosynthesis; L-methionine biosynthesis via salvage pathway; L-methionine from S-methyl-5-thio-alpha-D-ribose 1-phosphate: step 4/6. Functionally, bifunctional enzyme that catalyzes the enolization of 2,3-diketo-5-methylthiopentyl-1-phosphate (DK-MTP-1-P) into the intermediate 2-hydroxy-3-keto-5-methylthiopentenyl-1-phosphate (HK-MTPenyl-1-P), which is then dephosphorylated to form the acireductone 1,2-dihydroxy-3-keto-5-methylthiopentene (DHK-MTPene). This chain is Enolase-phosphatase E1, found in Drosophila yakuba (Fruit fly).